A 365-amino-acid polypeptide reads, in one-letter code: Aspartate-semialdehyde dehydrogenase (365 aa).

The NADP(+) site is built by Thr15, Gly16, Thr17, Val18, Ser40, Ser43, Leu89, and Asp90. Catalysis depends on Cys156, which acts as the Acyl-thioester intermediate. Gly188 is an NADP(+) binding site. Residue His255 is the Proton acceptor of the active site. Asn342 serves as a coordination point for NADP(+).

It belongs to the aspartate-semialdehyde dehydrogenase family. As to quaternary structure, homotetramer; dimer of dimers.

It localises to the cytoplasm. The protein resides in the cytosol. It is found in the nucleus. The enzyme catalyses L-aspartate 4-semialdehyde + phosphate + NADP(+) = 4-phospho-L-aspartate + NADPH + H(+). Its pathway is amino-acid biosynthesis; L-methionine biosynthesis via de novo pathway; L-homoserine from L-aspartate: step 2/3. The protein operates within amino-acid biosynthesis; L-threonine biosynthesis; L-threonine from L-aspartate: step 2/5. With respect to regulation, inhibited by the competitive inhibitor 1,4-benzoquinone and derivates such as 2-chloro-3-methoxy-1,4-naphthoquinone, 2,3-dichloro-1,4-naphthoquinone, 2-chloro-1,4-naphthoquinone, 2-bromo-1,4-naphthoquinone and 2,3-dichloro-5,8-dihydroxy-1,4-naphthoquinone. Its function is as follows. Catalyzes the NADPH-dependent formation of L-aspartate 4-semialdehyde (L-ASA) by the reductive dephosphorylation of 4-phospho-L-aspartate. Mediates the second step in the biosynthesis of amino acids that derive from aspartate (the aspartate family of amino acids), including methioinine and threonine, the latter of which is a precursor to isoleucine. The polypeptide is Aspartate-semialdehyde dehydrogenase (Cryptococcus neoformans var. neoformans serotype D (strain JEC21 / ATCC MYA-565) (Filobasidiella neoformans)).